Here is a 1020-residue protein sequence, read N- to C-terminus: Neurofilament heavy polypeptide (1020 aa).

Residues 1–100 are head; the sequence is MMSFGGADAL…VATSRSEKEQ (100 aa). The segment at 58 to 83 is disordered; that stretch reads VSASPSRFRGAGAASSTDSLDTLSNG. Polar residues predominate over residues 71–82; the sequence is ASSTDSLDTLSN. A phosphoserine mark is found at S76 and S124. One can recognise an IF rod domain in the interval 97-413; that stretch reads EKEQLQALND…KLLEGEECRI (317 aa). Residues 101-132 are coil 1A; that stretch reads LQALNDRFAGYIDKVRQLEAHNRSLEGEAAAL. The linker 1 stretch occupies residues 133 to 145; that stretch reads RQQQAGRSAMGEL. The interval 146-244 is coil 1B; that stretch reads YEREVREMRG…QEEVGELLGQ (99 aa). Residues 245 to 266 form a linker 12 region; the sequence is IQGSGAAQAQMQAETRDALKCD. The tract at residues 267–288 is coil 2A; the sequence is VTSALREIRAQLEGHAVQSTLQ. The linker 2 stretch occupies residues 289 to 292; sequence SEEW. The coil 2B stretch occupies residues 293-413; that stretch reads FRVRLDRLSE…KLLEGEECRI (121 aa). Residues S347 and S421 each carry the phosphoserine modification. Residues 414–1020 form a tail region; that stretch reads GFGPIPFSLP…ATEDKAAKGK (607 aa). The interval 456–1020 is disordered; sequence IVEEQTEETQ…ATEDKAAKGK (565 aa). Composition is skewed to acidic residues over residues 459-475 and 483-498; these read EQTE…EEEE and GKEE…EGGE. A phosphoserine mark is found at S511, S526, S532, S540, S546, S552, S560, S566, S574, S580, S586, S594, S600, S606, S614, S620, S628, S634, S640, S648, S654, S662, S668, S676, S682, S690, S696, and S704. Positions 511–1020 are enriched in basic and acidic residues; it reads SPEKEAKSPV…ATEDKAAKGK (510 aa). Repeat copies occupy residues 525 to 530, 531 to 536, 539 to 544, and 545 to 550. The 30 X 6 AA repeats of K-S-P-[AEPV]-[EAK]-[AEVK] stretch occupies residues 525-826; sequence KSPAEAKSPE…KEEVKSPVKE (302 aa). Residues 559–564 form repeat 5; sequence KSPPEA. 2 tandem repeats follow at residues 573–578 and 579–584. A run of 2 repeats spans residues 593 to 598 and 599 to 604. Residues 613-618 form repeat 10; it reads KSPAEA. 4 repeat units span residues 627–632, 633–638, 639–644, and 647–652. 12 tandem repeats follow at residues 661–666, 667–672, 675–680, 681–686, 689–694, 695–700, 703–708, 709–714, 717–722, 723–728, 737–742, and 745–750. A phosphoserine mark is found at S718, S724, and S738. S752 and S763 each carry phosphoserine. Residues 762–767 form repeat 27; it reads KSPEAK. Residue T768 is modified to Phosphothreonine. Tandem repeats lie at residues 786–791, 794–799, and 821–826. Phosphoserine is present on residues S787, S795, S822, and S888.

Belongs to the intermediate filament family. As to quaternary structure, forms heterodimers with NEFL; which can further hetero-oligomerize (in vitro). Forms heterodimers with INA (in vitro). Post-translationally, there are a number of repeats of the tripeptide K-S-P, NFH is phosphorylated on a number of the serines in this motif. It is thought that phosphorylation of NFH results in the formation of interfilament cross bridges that are important in the maintenance of axonal caliber. Phosphorylation seems to play a major role in the functioning of the larger neurofilament polypeptides (NF-M and NF-H), the levels of phosphorylation being altered developmentally and coincidentally with a change in the neurofilament function. In terms of processing, phosphorylated in the head and rod regions by the PKC kinase PKN1, leading to the inhibition of polymerization.

Its subcellular location is the cytoplasm. It localises to the cytoskeleton. It is found in the cell projection. The protein localises to the axon. In terms of biological role, neurofilaments usually contain three intermediate filament proteins: NEFL, NEFM, and NEFH which are involved in the maintenance of neuronal caliber. NEFH has an important function in mature axons that is not subserved by the two smaller NF proteins. May additionally cooperate with the neuronal intermediate filament proteins PRPH and INA to form neuronal filamentous networks. This is Neurofilament heavy polypeptide (NEFH) from Homo sapiens (Human).